A 1011-amino-acid polypeptide reads, in one-letter code: Antigenic heat-stable 120 kDa protein (1011 aa).

3 disordered regions span residues 1–37 (DTSE…TPAL), 54–73 (TPSM…TSDP), and 348–396 (GQSK…PQSQ). Positions 12–27 (EYTEEQKQTEEQEQKE) are enriched in basic and acidic residues. Polar residues-rich tracts occupy residues 348–373 (GQSK…QYKQ) and 380–396 (PTNQ…PQSQ).

It is found in the cytoplasm. The polypeptide is Antigenic heat-stable 120 kDa protein (sca4) (Rickettsia sibirica subsp. mongolitimonae (Rickettsia mongolotimonae)).